A 233-amino-acid chain; its full sequence is Phosphatidylserine decarboxylase proenzyme (233 aa).

The active-site Schiff-base intermediate with substrate; via pyruvic acid is the Ser201. Ser201 is subject to Pyruvic acid (Ser); by autocatalysis.

This sequence belongs to the phosphatidylserine decarboxylase family. PSD-A subfamily. As to quaternary structure, heterodimer of a large membrane-associated beta subunit and a small pyruvoyl-containing alpha subunit. Pyruvate is required as a cofactor. Post-translationally, is synthesized initially as an inactive proenzyme. Formation of the active enzyme involves a self-maturation process in which the active site pyruvoyl group is generated from an internal serine residue via an autocatalytic post-translational modification. Two non-identical subunits are generated from the proenzyme in this reaction, and the pyruvate is formed at the N-terminus of the alpha chain, which is derived from the carboxyl end of the proenzyme. The post-translation cleavage follows an unusual pathway, termed non-hydrolytic serinolysis, in which the side chain hydroxyl group of the serine supplies its oxygen atom to form the C-terminus of the beta chain, while the remainder of the serine residue undergoes an oxidative deamination to produce ammonia and the pyruvoyl prosthetic group on the alpha chain.

It localises to the cell membrane. The catalysed reaction is a 1,2-diacyl-sn-glycero-3-phospho-L-serine + H(+) = a 1,2-diacyl-sn-glycero-3-phosphoethanolamine + CO2. Its pathway is phospholipid metabolism; phosphatidylethanolamine biosynthesis; phosphatidylethanolamine from CDP-diacylglycerol: step 2/2. Functionally, catalyzes the formation of phosphatidylethanolamine (PtdEtn) from phosphatidylserine (PtdSer). The polypeptide is Phosphatidylserine decarboxylase proenzyme (Mycolicibacterium vanbaalenii (strain DSM 7251 / JCM 13017 / BCRC 16820 / KCTC 9966 / NRRL B-24157 / PYR-1) (Mycobacterium vanbaalenii)).